The following is a 788-amino-acid chain: Glucan 1,3-beta-glucosidase (788 aa).

Residues 1–42 (MRFSSLLACLGAVGIQAAAIPFQRRVDNTTDSGSLDAAQAAA) form the signal peptide. Asn28, Asn233, Asn381, and Asn773 each carry an N-linked (GlcNAc...) asparagine glycan.

The protein belongs to the glycosyl hydrolase 55 family.

The catalysed reaction is Successive hydrolysis of beta-D-glucose units from the non-reducing ends of (1-&gt;3)-beta-D-glucans, releasing alpha-glucose.. The polypeptide is Glucan 1,3-beta-glucosidase (EXG1) (Cochliobolus carbonum (Maize leaf spot fungus)).